The sequence spans 497 residues: Low affinity K(+) transporter 1 (497 aa).

At M1–K29 the chain is on the extracellular side. A helical membrane pass occupies residues T30 to V50. Residues S51–K80 lie on the Cytoplasmic side of the membrane. A helical transmembrane segment spans residues W81–G101. Topologically, residues M102–S216 are extracellular. Residues L217 to I237 form a helical membrane-spanning segment. Residues C238–T497 are Cytoplasmic-facing. Residues S291 and S319 each carry the phosphoserine modification. Positions E420–Y469 are disordered. Low complexity predominate over residues P429–R444. A compositionally biased stretch (polar residues) spans Q451–N465.

The protein belongs to the KCH1 low affinity K(+) transporter family.

It is found in the vacuole membrane. It localises to the cell membrane. It carries out the reaction K(+)(in) = K(+)(out). Low affinity potassium transporter that, with PRM6/KCH2, participates in high-affinity Ca(2+) influx system (HACS) activation during the response to mating pheromone. Directly promotes K(+) influx and HACS may electrochemically respond to this K(+) influx. KCH1 and KCH2 act at the apex of the calcium signaling pathway that is used for survival during prolonged exposures to mating pheromones. In Saccharomyces cerevisiae (strain ATCC 204508 / S288c) (Baker's yeast), this protein is Low affinity K(+) transporter 1.